A 1005-amino-acid polypeptide reads, in one-letter code: MDLISTFLLHFLLLACSLPPGAVSLRTALRKSGKVGPPLDIKLGALNCTAFSIQWKTPKRSGSSIVGYTVFYSELGSDKSLREQSHNVPVGQDTLITEEVIGDLKPGTEYRVSIAAYSQTGKGRLSFPRHVTTLSQDSCLPPEAPHQPHVLVVSDSEVALSWRPGENEGSAPIQSYSVEFIRPDFDKSWTIIQERLQMDSMVIKGLDPDTNYQFAVRAMNAYGFSLRSQPSNTIRTLGPGEAGSGRYGPGYITDTGVSEDDDASEDELDLDVSFEEVKPLPATKVGNKKSKKTSVSNSEMDSRLAQPTSASLPETTVAVPPTPAQRKGKNSVAVMSRLFDMSCDETLCSADSFCVNDYAWGGSRCHCNLGKGGEACSEDIFIQYPQFFGHSYVTFEPLKNSYQAFQITLEFRAEAEDGLLLYCGESEHGRGDFMSLALIRRSLHFRFNCGTGMAIIISETKIKLGAWHSVTLYRDGLNGLLQLNNGTPVTGQSQGQYSKITFRTPLYLGGAPSAYWLVRATGTNRGFQGCVQSLAVNGKKIDMRPWPLGKALNGADVGECSSGICDEASCINGGTCAAIKADSYICLCPLGFRGRHCEDAFTLTIPQFRESLRSYAATPWPLEPQHYLSFTEFEITFRPDSGDGVLLYSYDTSSKDFLSIIMAAGHVEFRFDCGSGTGVLRSEDTLTLGQWHDLRVSRTAKNGILQVDKQKVVEGMAEGGFTQIKCNTDIFIGGVPNYDDVKKNSGILHPFSGSIQKIILNDRTIHVRHDFTSGVNVENAAHPCVGAPCAHGGSCRPRKEGYECDCPLGFEGLNCQKAITEAIEIPQFIGRSYLTYDNPNILKRVSGSRSNAFMRFKTTAKDGLLLWRGDSPMRPNSDFISLGLRDGALVFSYNLGSGVASIMVNGSFSDGRWHRVKAVRDGQSGKITVDDYGARTGKSPGMMRQLNINGALYVGGMKEIALRTNRQYMRGLVGCISHFTLSTDYHISLVEDAVDGKNINTCGAK.

The signal sequence occupies residues 1 to 24 (MDLISTFLLHFLLLACSLPPGAVS). Fibronectin type-III domains follow at residues 37–136 (PPLD…TLSQ) and 144–239 (APHQ…TLGP). N-linked (GlcNAc...) asparagine glycosylation occurs at N47. The tract at residues 281 to 328 (PATKVGNKKSKKTSVSNSEMDSRLAQPTSASLPETTVAVPPTPAQRKG) is disordered. The span at 305-314 (AQPTSASLPE) shows a compositional bias: polar residues. The region spanning 339-377 (FDMSCDETLCSADSFCVNDYAWGGSRCHCNLGKGGEACS) is the EGF-like 1 domain. 11 cysteine pairs are disulfide-bonded: C343–C354, C348–C365, C367–C376, C530–C560, C565–C576, C570–C586, C588–C597, C784–C795, C789–C804, C806–C815, and C975–C1002. One can recognise a Laminin G-like 1 domain in the interval 382 to 560 (IQYPQFFGHS…ALNGADVGEC (179 aa)). 2 EGF-like domains span residues 561–598 (SSGI…RHCE) and 780–816 (AAHP…LNCQ). The region spanning 605 to 784 (IPQFRESLRS…VNVENAAHPC (180 aa)) is the Laminin G-like 2 domain. The Laminin G-like 3 domain occupies 823 to 1002 (IEIPQFIGRS…AVDGKNINTC (180 aa)).

In terms of assembly, interacts with DAG1 alpha-dystroglycan. Interacts with GPR158 and GPR179; transsynaptic interaction is required for synaptic organization of photoreceptor cells. In terms of processing, O-glycosylated; contains chondroitin sulfate and heparan sulfate.

Its subcellular location is the secreted. It localises to the extracellular space. The protein localises to the extracellular matrix. It is found in the synaptic cleft. The protein resides in the presynaptic active zone. Involved in both the retinal photoreceptor ribbon synapse formation and physiological functions of visual perception. Plays a key role in the synaptic organization of photoreceptors by mediating transsynaptic interaction between alpha-dystroglycan and GPR179 on the postsynaptic membrane. Necessary for proper bipolar dendritic tip apposition to the photoreceptor ribbon synapse. Promotes matrix assembly and cell adhesiveness. The sequence is that of Pikachurin (Egflam) from Rattus norvegicus (Rat).